A 259-amino-acid polypeptide reads, in one-letter code: Oxidase ustYb (259 aa).

The chain crosses the membrane as a helical span at residues 36–56 (IIYTSLAFVGFIEILFFGIFF). N102 and N122 each carry an N-linked (GlcNAc...) asparagine glycan. 2 consecutive short sequence motifs (HXXHC) follow at residues 147–151 (HQLHC) and 197–201 (HVDHC).

This sequence belongs to the ustYa family.

It localises to the membrane. It functions in the pathway mycotoxin biosynthesis. In terms of biological role, oxidase; part of the gene cluster that mediates the biosynthesis of the secondary metabolite ustiloxin B, an antimitotic tetrapeptide. First, ustA is processed by the subtilisin-like endoprotease Kex2 that is outside the ustiloxin B gene cluster, at the C-terminal side of Arg-Lys, after transfer to Golgi apparatus through the endoplasmic reticulum (ER). Cleavage by KEX2 generates 16 peptides YAIG-I to YAIG-XVI. To process the precursor peptide further, at least two peptidases are necessary to cleave the N-terminal and C-terminal sides of the Tyr-Ala-Ile-Gly core peptide which serves as backbone for the synthesis of ustiloxin B, through cyclization and modification of the tyrosine with a non-protein coding amino acid, norvaline. One of the two peptidases must be the serine peptidase ustP; and the other pepdidase is probably ustH. Macrocyclization of the core peptide derived from ustA requires the tyrosinase ustQ, as well as the homologous oxidases ustYa and ustYb, and leads to the production of the first cyclization product N-desmethylustiloxin F. For the formation of N-desmethylustiloxin F, three oxidation steps are required, hydroxylation at the benzylic position, hydroxylation at either the aromatic ring of Tyr or beta-position of Ile, and oxidative cyclization. UstQ may catalyze the oxidation of a phenol moiety, whereas the ustYa and ustYb are most likely responsible for the remaining two-step oxidations. N-desmethylustiloxin F is then methylated by ustM to yield ustiloxin F which in turn substrate of the cytochrome P450 monooxygenase ustC which catalyzes the formation of S-deoxyustiloxin H. The flavoprotein monooxygenases ustF1 and ustF2 then participate in the modification of the side chain of S-deoxyustiloxin H, leading to the synthesis of an oxime intermediate, via ustiloxin H. Finally, carboxylative dehydration performed by the cysteine desulfurase-like protein ustD yields ustiloxin B. This chain is Oxidase ustYb, found in Aspergillus flavus (strain ATCC 200026 / FGSC A1120 / IAM 13836 / NRRL 3357 / JCM 12722 / SRRC 167).